The sequence spans 503 residues: Depupylase (503 aa).

Glu-8 and Tyr-92 together coordinate Mg(2+). Asp-94 (proton acceptor) is an active-site residue. Glu-99 is a Mg(2+) binding site. 101–102 (ST) contributes to the ATP binding site. Residue His-155 coordinates Mg(2+). ATP-binding residues include Asn-157 and Arg-239. Mg(2+) is bound at residue His-241.

This sequence belongs to the Pup ligase/Pup deamidase family. Pup deamidase subfamily. Likely interacts with the C-terminal half of the prokaryotic ubiquitin-like protein Pup. ATP is required as a cofactor.

It functions in the pathway protein degradation; proteasomal Pup-dependent pathway. Its function is as follows. Displays depupylase (DPUP) activity, removing conjugated Pup from target proteins; is thus involved in the recycling of Pup and may function similarly to deubiquitinases (DUBs) in eukaryotes to prevent or promote proteasomal degradation of certain proteins. Is also able to catalyze the deamidation of the C-terminal glutamine to glutamate in a variant of the prokaryotic ubiquitin-like protein Pup; however, since Pup from A.cellulolyticus possesses a C-terminal glutamate, this deamidase activity may be of no significance in vivo. The polypeptide is Depupylase (dop) (Acidothermus cellulolyticus (strain ATCC 43068 / DSM 8971 / 11B)).